The following is a 343-amino-acid chain: Thymidine kinase (343 aa).

27–34 (GAYGIGKS) contributes to the ATP binding site. Glu-56 (proton acceptor) is an active-site residue. Substrate is bound by residues Tyr-74 and Gln-98. Arg-188 provides a ligand contact to ATP. Residue Arg-194 participates in substrate binding.

It belongs to the herpesviridae thymidine kinase family. Homodimer.

It carries out the reaction thymidine + ATP = dTMP + ADP + H(+). Its function is as follows. Catalyzes the transfer of the gamma-phospho group of ATP to thymidine to generate dTMP in the salvage pathway of pyrimidine synthesis. The dTMP serves as a substrate for DNA polymerase during viral DNA replication. Allows the virus to be reactivated and to grow in non-proliferative cells lacking a high concentration of phosphorylated nucleic acid precursors. This Felidae (cat family) protein is Thymidine kinase.